Consider the following 166-residue polypeptide: Large ribosomal subunit protein uL10 (166 aa).

It belongs to the universal ribosomal protein uL10 family. As to quaternary structure, part of the ribosomal stalk of the 50S ribosomal subunit. The N-terminus interacts with L11 and the large rRNA to form the base of the stalk. The C-terminus forms an elongated spine to which L12 dimers bind in a sequential fashion forming a multimeric L10(L12)X complex.

Its function is as follows. Forms part of the ribosomal stalk, playing a central role in the interaction of the ribosome with GTP-bound translation factors. The protein is Large ribosomal subunit protein uL10 of Bacillus cereus (strain ATCC 14579 / DSM 31 / CCUG 7414 / JCM 2152 / NBRC 15305 / NCIMB 9373 / NCTC 2599 / NRRL B-3711).